The primary structure comprises 293 residues: Glycine--tRNA ligase alpha subunit (293 aa).

Belongs to the class-II aminoacyl-tRNA synthetase family. As to quaternary structure, tetramer of two alpha and two beta subunits.

It is found in the cytoplasm. It catalyses the reaction tRNA(Gly) + glycine + ATP = glycyl-tRNA(Gly) + AMP + diphosphate. The chain is Glycine--tRNA ligase alpha subunit from Aliarcobacter butzleri (strain RM4018) (Arcobacter butzleri).